Reading from the N-terminus, the 351-residue chain is Fruit bromelain (351 aa).

The first 24 residues, 1–24, serve as a signal peptide directing secretion; sequence MASKVQLVFLFLFLCAMWASPSAA. The propeptide at 25 to 121 is activation peptide; sequence SRDEPNDPMM…VVSFDDVNIS (97 aa). Residue asparagine 119 is glycosylated (N-linked (GlcNAc...) asparagine). 3 disulfides stabilise this stretch: cysteine 144–cysteine 184, cysteine 178–cysteine 217, and cysteine 273–cysteine 325. Cysteine 147 is a catalytic residue. Catalysis depends on residues histidine 279 and asparagine 300.

This sequence belongs to the peptidase C1 family.

The catalysed reaction is Hydrolysis of proteins with broad specificity for peptide bonds. Bz-Phe-Val-Arg-|-NHMec is a good synthetic substrate, but there is no action on Z-Arg-Arg-|-NHMec (cf. stem bromelain).. Its function is as follows. Cysteine proteinase with a high level of diversity in substrate specificity. This is Fruit bromelain from Ananas comosus (Pineapple).